The sequence spans 352 residues: NADP-dependent isopropanol dehydrogenase (352 aa).

3 residues coordinate Zn(2+): Cys37, His59, and Asp150. NADP(+) contacts are provided by residues 175 to 178 (IGPV), 198 to 200 (GSR), Tyr218, 265 to 267 (VNY), and Lys340.

It belongs to the zinc-containing alcohol dehydrogenase family. Homotetramer. Zn(2+) serves as cofactor.

It catalyses the reaction propan-2-ol + NADP(+) = acetone + NADPH + H(+). Alcohol dehydrogenase with a preference for medium chain secondary alcohols, such as 2-butanol and isopropanol. Has very low activity with primary alcohols, such as ethanol. Under physiological conditions, the enzyme reduces aldehydes and 2-ketones to produce secondary alcohols. Is also active with acetaldehyde and propionaldehyde. This chain is NADP-dependent isopropanol dehydrogenase (adh), found in Thermoanaerobacter brockii (Thermoanaerobium brockii).